Consider the following 393-residue polypeptide: S-adenosylmethionine synthase (393 aa).

ATP is bound at residue His-16. Asp-18 serves as a coordination point for Mg(2+). A K(+)-binding site is contributed by Glu-44. Residues Glu-57 and Gln-100 each contribute to the L-methionine site. Residues 100–110 (QSNDIAQGVDH) form a flexible loop region. ATP is bound by residues 167–169 (DAK), 238–239 (RF), Asp-247, 253–254 (RK), Ala-270, and Lys-274. Asp-247 contacts L-methionine. Lys-278 lines the L-methionine pocket.

The protein belongs to the AdoMet synthase family. Homotetramer; dimer of dimers. Mg(2+) serves as cofactor. K(+) is required as a cofactor.

It is found in the cytoplasm. The catalysed reaction is L-methionine + ATP + H2O = S-adenosyl-L-methionine + phosphate + diphosphate. Its pathway is amino-acid biosynthesis; S-adenosyl-L-methionine biosynthesis; S-adenosyl-L-methionine from L-methionine: step 1/1. Functionally, catalyzes the formation of S-adenosylmethionine (AdoMet) from methionine and ATP. The overall synthetic reaction is composed of two sequential steps, AdoMet formation and the subsequent tripolyphosphate hydrolysis which occurs prior to release of AdoMet from the enzyme. In Polaromonas sp. (strain JS666 / ATCC BAA-500), this protein is S-adenosylmethionine synthase.